Reading from the N-terminus, the 122-residue chain is Large ribosomal subunit protein bL12 (122 aa).

This sequence belongs to the bacterial ribosomal protein bL12 family. As to quaternary structure, homodimer. Part of the ribosomal stalk of the 50S ribosomal subunit. Forms a multimeric L10(L12)X complex, where L10 forms an elongated spine to which 2 to 4 L12 dimers bind in a sequential fashion. Binds GTP-bound translation factors.

Forms part of the ribosomal stalk which helps the ribosome interact with GTP-bound translation factors. Is thus essential for accurate translation. This is Large ribosomal subunit protein bL12 from Myxococcus xanthus (strain DK1622).